A 1134-amino-acid polypeptide reads, in one-letter code: Protocadherin 18 (1134 aa).

The first 27 residues, 1–27 (MHQMNTKMHFRFALALLMAFFSHDVLA), serve as a signal peptide directing secretion. 6 Cadherin domains span residues 28 to 137 (KNLK…SPQF), 138 to 246 (SRPV…SPAF), 247 to 354 (EQPS…KPEI), 361 to 465 (PGKE…PPRF), 466 to 576 (QRSR…VPVV), and 582 to 688 (HNNT…STAM). Over 28-699 (KNLKYRIYEE…SVSRASLDVS (672 aa)) the chain is Extracellular. Residue Asn103 is glycosylated (N-linked (GlcNAc...) asparagine). Residue Asn269 is glycosylated (N-linked (GlcNAc...) asparagine). A glycan (N-linked (GlcNAc...) asparagine) is linked at Asn559. The chain crosses the membrane as a helical span at residues 700 to 720 (MIIIISLGAICAVLLVIMVLF). Topologically, residues 721-1134 (ATRCNREKKD…NKLLQDVRQS (414 aa)) are cytoplasmic. Disordered regions lie at residues 769–800 (LPIR…NSHQ), 868–888 (SLKD…DLGR), 941–1004 (DYRS…SSLL), and 1022–1083 (FSEC…PSSK). Residues 791-800 (GSRQSHNSHQ) show a composition bias toward polar residues. Positions 868–877 (SLKDSGRGDS) are enriched in basic and acidic residues. Residues 892 to 1134 (IDRLLGEGFS…NKLLQDVRQS (243 aa)) form an interaction with DAB1 region. The span at 1027 to 1038 (EGDRSNSLERRK) shows a compositional bias: basic and acidic residues. Residues 1059–1082 (THFQNPTSSSGTPLGTHSSVQPSS) are compositionally biased toward polar residues.

Interacts with DAB1. Predominantly expressed in kidney and lung.

The protein resides in the cell membrane. Functionally, potential calcium-dependent cell-adhesion protein. The polypeptide is Protocadherin 18 (Pcdh18) (Mus musculus (Mouse)).